Reading from the N-terminus, the 297-residue chain is tRNA dimethylallyltransferase (297 aa).

9–16 (GPTASGKS) serves as a coordination point for ATP. 11–16 (TASGKS) lines the substrate pocket. Interaction with substrate tRNA stretches follow at residues 34 to 37 (DSMQ) and 155 to 159 (QRVIR).

Belongs to the IPP transferase family. In terms of assembly, monomer. The cofactor is Mg(2+).

It catalyses the reaction adenosine(37) in tRNA + dimethylallyl diphosphate = N(6)-dimethylallyladenosine(37) in tRNA + diphosphate. In terms of biological role, catalyzes the transfer of a dimethylallyl group onto the adenine at position 37 in tRNAs that read codons beginning with uridine, leading to the formation of N6-(dimethylallyl)adenosine (i(6)A). The sequence is that of tRNA dimethylallyltransferase from Leuconostoc mesenteroides subsp. mesenteroides (strain ATCC 8293 / DSM 20343 / BCRC 11652 / CCM 1803 / JCM 6124 / NCDO 523 / NBRC 100496 / NCIMB 8023 / NCTC 12954 / NRRL B-1118 / 37Y).